A 264-amino-acid polypeptide reads, in one-letter code: S-adenosylmethionine decarboxylase proenzyme (264 aa).

Residue serine 112 is the Schiff-base intermediate with substrate; via pyruvic acid of the active site. At serine 112 the chain carries Pyruvic acid (Ser); by autocatalysis. Histidine 117 (proton acceptor; for processing activity) is an active-site residue. The Proton donor; for catalytic activity role is filled by cysteine 140.

Belongs to the prokaryotic AdoMetDC family. Type 2 subfamily. In terms of assembly, heterooctamer of four alpha and four beta chains arranged as a tetramer of alpha/beta heterodimers. Pyruvate serves as cofactor. Post-translationally, is synthesized initially as an inactive proenzyme. Formation of the active enzyme involves a self-maturation process in which the active site pyruvoyl group is generated from an internal serine residue via an autocatalytic post-translational modification. Two non-identical subunits are generated from the proenzyme in this reaction, and the pyruvate is formed at the N-terminus of the alpha chain, which is derived from the carboxyl end of the proenzyme. The post-translation cleavage follows an unusual pathway, termed non-hydrolytic serinolysis, in which the side chain hydroxyl group of the serine supplies its oxygen atom to form the C-terminus of the beta chain, while the remainder of the serine residue undergoes an oxidative deamination to produce ammonia and the pyruvoyl group blocking the N-terminus of the alpha chain.

It catalyses the reaction S-adenosyl-L-methionine + H(+) = S-adenosyl 3-(methylsulfanyl)propylamine + CO2. It participates in amine and polyamine biosynthesis; S-adenosylmethioninamine biosynthesis; S-adenosylmethioninamine from S-adenosyl-L-methionine: step 1/1. Its function is as follows. Catalyzes the decarboxylation of S-adenosylmethionine to S-adenosylmethioninamine (dcAdoMet), the propylamine donor required for the synthesis of the polyamines spermine and spermidine from the diamine putrescine. The polypeptide is S-adenosylmethionine decarboxylase proenzyme (Salmonella choleraesuis (strain SC-B67)).